The primary structure comprises 220 residues: NADH-quinone oxidoreductase subunit I (220 aa).

4Fe-4S ferredoxin-type domains are found at residues 71-102 (LQRLLDSGSERCIGCGLCEKICTSNCIRIITH) and 112-141 (DSYTINLGRCIYCGLCAEVCPELAIVMGNR). 8 residues coordinate [4Fe-4S] cluster: Cys-82, Cys-85, Cys-88, Cys-92, Cys-121, Cys-124, Cys-127, and Cys-131. Positions 189 to 220 (ATPLDYVQEPSKEESKKETPTSPEANKGDENV) are disordered. The span at 198–207 (PSKEESKKET) shows a compositional bias: basic and acidic residues.

The protein belongs to the complex I 23 kDa subunit family. NDH-1 is composed of 14 different subunits. Subunits NuoA, H, J, K, L, M, N constitute the membrane sector of the complex. [4Fe-4S] cluster serves as cofactor.

It is found in the cell inner membrane. The enzyme catalyses a quinone + NADH + 5 H(+)(in) = a quinol + NAD(+) + 4 H(+)(out). NDH-1 shuttles electrons from NADH, via FMN and iron-sulfur (Fe-S) centers, to quinones in the respiratory chain. The immediate electron acceptor for the enzyme in this species is believed to be ubiquinone. Couples the redox reaction to proton translocation (for every two electrons transferred, four hydrogen ions are translocated across the cytoplasmic membrane), and thus conserves the redox energy in a proton gradient. The chain is NADH-quinone oxidoreductase subunit I from Helicobacter acinonychis (strain Sheeba).